The sequence spans 299 residues: ATP phosphoribosyltransferase (299 aa).

Belongs to the ATP phosphoribosyltransferase family. Long subfamily. As to quaternary structure, equilibrium between an active dimeric form, an inactive hexameric form and higher aggregates. Interconversion between the various forms is largely reversible and is influenced by the natural substrates and inhibitors of the enzyme. The cofactor is Mg(2+).

It localises to the cytoplasm. It catalyses the reaction 1-(5-phospho-beta-D-ribosyl)-ATP + diphosphate = 5-phospho-alpha-D-ribose 1-diphosphate + ATP. It participates in amino-acid biosynthesis; L-histidine biosynthesis; L-histidine from 5-phospho-alpha-D-ribose 1-diphosphate: step 1/9. With respect to regulation, feedback inhibited by histidine. Catalyzes the condensation of ATP and 5-phosphoribose 1-diphosphate to form N'-(5'-phosphoribosyl)-ATP (PR-ATP). Has a crucial role in the pathway because the rate of histidine biosynthesis seems to be controlled primarily by regulation of HisG enzymatic activity. The polypeptide is ATP phosphoribosyltransferase (Escherichia coli O157:H7).